A 279-amino-acid polypeptide reads, in one-letter code: NAD kinase (279 aa).

Asp-61 acts as the Proton acceptor in catalysis. NAD(+)-binding positions include Asp-61–Gly-62, Asn-138–Asp-139, Lys-149, Lys-166, Asp-168, and Thr-179–Ser-184.

The protein belongs to the NAD kinase family. A divalent metal cation is required as a cofactor.

It localises to the cytoplasm. The catalysed reaction is NAD(+) + ATP = ADP + NADP(+) + H(+). Functionally, involved in the regulation of the intracellular balance of NAD and NADP, and is a key enzyme in the biosynthesis of NADP. Catalyzes specifically the phosphorylation on 2'-hydroxyl of the adenosine moiety of NAD to yield NADP. The polypeptide is NAD kinase (Borreliella burgdorferi (strain ATCC 35210 / DSM 4680 / CIP 102532 / B31) (Borrelia burgdorferi)).